Reading from the N-terminus, the 350-residue chain is Histidinol-phosphate aminotransferase 2 (350 aa).

Position 210 is an N6-(pyridoxal phosphate)lysine (lysine 210).

Belongs to the class-II pyridoxal-phosphate-dependent aminotransferase family. Histidinol-phosphate aminotransferase subfamily. As to quaternary structure, homodimer. Pyridoxal 5'-phosphate serves as cofactor.

The catalysed reaction is L-histidinol phosphate + 2-oxoglutarate = 3-(imidazol-4-yl)-2-oxopropyl phosphate + L-glutamate. It participates in amino-acid biosynthesis; L-histidine biosynthesis; L-histidine from 5-phospho-alpha-D-ribose 1-diphosphate: step 7/9. This chain is Histidinol-phosphate aminotransferase 2, found in Mannheimia succiniciproducens (strain KCTC 0769BP / MBEL55E).